The chain runs to 191 residues: UPF0302 protein USA300HOU_1400 (191 aa).

Belongs to the UPF0302 family.

This is UPF0302 protein USA300HOU_1400 from Staphylococcus aureus (strain USA300 / TCH1516).